We begin with the raw amino-acid sequence, 130 residues long: Succinate dehydrogenase assembly factor 3, mitochondrial (130 aa).

Residues Met-1–Leu-8 constitute a mitochondrion transit peptide.

Belongs to the complex I LYR family. SDHAF3 subfamily. As to quaternary structure, interacts with the iron-sulfur protein subunit within the SDH catalytic dimer.

It is found in the mitochondrion matrix. In terms of biological role, plays an essential role in the assembly of succinate dehydrogenase (SDH), an enzyme complex (also referred to as respiratory complex II) that is a component of both the tricarboxylic acid (TCA) cycle and the mitochondrial electron transport chain, and which couples the oxidation of succinate to fumarate with the reduction of ubiquinone (coenzyme Q) to ubiquinol. Promotes maturation of the iron-sulfur protein subunit of the SDH catalytic dimer, protecting it from the deleterious effects of oxidants. May act together with SDHAF1. The protein is Succinate dehydrogenase assembly factor 3, mitochondrial of Gibberella zeae (strain ATCC MYA-4620 / CBS 123657 / FGSC 9075 / NRRL 31084 / PH-1) (Wheat head blight fungus).